The primary structure comprises 233 residues: MSSLESARADLALLILYLNKAEARDKICRAIQYGSKFVSNGQPGPAQNVDKSTSLARKVFRLFKFVNDLHALISPPAKGTPLPLILLGKSKNALLSTFLFLDQIVWAGRTGIYKNKERAEFLSKIAFYCFLGSNTCTSIIEVAELQRLSKSMKKLEKELKHQELLKNEQYQMKLQKCNERRLALIKSSLDIVVAIGLLQLAPKKVTPRVTGAFGFASSLIACYQLLPAPAKSK.

The Cytoplasmic portion of the chain corresponds to 1-92 (MSSLESARAD…PLILLGKSKN (92 aa)). Residues 93–113 (ALLSTFLFLDQIVWAGRTGIY) traverse the membrane as a helical segment. Over 114–206 (KNKERAEFLS…LLQLAPKKVT (93 aa)) the chain is Lumenal. A helical transmembrane segment spans residues 207–226 (PRVTGAFGFASSLIACYQLL).

The protein belongs to the peroxin-11 family. In terms of tissue distribution, expressed in seedlings, roots, shoots, leaf sheaths, flag leaf, panicles, spikelets, and endosperm.

Its subcellular location is the peroxisome membrane. Functionally, involved in peroxisomal proliferation. This is Peroxisomal membrane protein 11-5 (PEX11-5) from Oryza sativa subsp. japonica (Rice).